Consider the following 833-residue polypeptide: Leucine--tRNA ligase (833 aa).

The 'HIGH' region signature appears at 41 to 52 (PYPSGAGLHVGH). A 'KMSKS' region motif is present at residues 610–614 (KMSKS). K613 contributes to the ATP binding site.

Belongs to the class-I aminoacyl-tRNA synthetase family.

It is found in the cytoplasm. It catalyses the reaction tRNA(Leu) + L-leucine + ATP = L-leucyl-tRNA(Leu) + AMP + diphosphate. This Streptococcus thermophilus (strain CNRZ 1066) protein is Leucine--tRNA ligase.